We begin with the raw amino-acid sequence, 296 residues long: Sulfotransferase 1B1 (296 aa).

48–53 (KSGTTW) is a binding site for 3'-phosphoadenylyl sulfate. Position 107 to 109 (107 to 109 (KTH)) interacts with substrate. Residue His109 is the Proton acceptor of the active site. 3'-phosphoadenylyl sulfate contacts are provided by residues Arg131, Ser139, Tyr194, 228-233 (TSFEMM), and 258-260 (RKG).

Belongs to the sulfotransferase 1 family. As to expression, expressed highly in the colon, kidney and small intestine of male and female dogs. Highly expressed in the jejunum and ileum of the male dog than the female dog, which displayed more expression in duodenum (at protein level).

The protein resides in the cytoplasm. It catalyses the reaction a phenol + 3'-phosphoadenylyl sulfate = an aryl sulfate + adenosine 3',5'-bisphosphate + H(+). The catalysed reaction is 3,3',5-triiodo-L-thyronine + 3'-phosphoadenylyl sulfate = 3,3',5-triiodo-L-thyronine sulfate + adenosine 3',5'-bisphosphate + H(+). The enzyme catalyses 3,3',5'-triiodo-L-thyronine + 3'-phosphoadenylyl sulfate = 3,3',5'-triiodo-L-thyronine sulfate + adenosine 3',5'-bisphosphate + H(+). It carries out the reaction 3,3'-diiodo-L-thyronine + 3'-phosphoadenylyl sulfate = 3,3'-diiodo-L-thyronine sulfate + adenosine 3',5'-bisphosphate + H(+). It catalyses the reaction 4-ethylphenol + 3'-phosphoadenylyl sulfate = 4-ethylphenyl sulfate + adenosine 3',5'-bisphosphate + H(+). Functionally, sulfotransferase that utilizes 3'-phospho-5'-adenylyl sulfate (PAPS) as sulfonate donor to catalyze the sulfate conjugation of dopamine, small phenols such as 1-naphthol and p-nitrophenol and thyroid hormones, including 3,3'-diiodothyronine, triidothyronine (T3) and reverse triiodothyronine (rT3). May play a role in gut microbiota-host metabolic interaction. O-sulfonates 4-ethylphenol (4-EP), a dietary tyrosine-derived metabolite produced by gut bacteria. The product 4-EPS crosses the blood-brain barrier and may negatively regulate oligodendrocyte maturation and myelination, affecting the functional connectivity of different brain regions associated with the limbic system. This chain is Sulfotransferase 1B1 (SULT1B1), found in Canis lupus familiaris (Dog).